The sequence spans 634 residues: Sodium-dependent neutral amino acid transporter B(0)AT1 (634 aa).

Topologically, residues 1 to 41 (MVRLVLPNPGLDARIPSLAELETIEQEEASSRPKWDNKAQY) are cytoplasmic. S17 carries the phosphoserine modification. The helical transmembrane segment at 42–62 (MLTCLGFCVGLGNVWRFPYLC) threads the bilayer. At 63-67 (QSHGG) the chain is on the extracellular side. Residues 68–88 (GAFMIPFLILLVLEGIPLLYL) traverse the membrane as a helical segment. Over 89 to 120 (EFAIGQRLRRGSLGVWSSIHPALKGLGLASML) the chain is Cytoplasmic. A helical membrane pass occupies residues 121–141 (TSFMVGLYYNTIISWIMWYLF). The Extracellular portion of the chain corresponds to 142–192 (NSFQEPLPWSDCPLNENQTGYVDECARSSPVDYFWYRETLNISTSISDSGS). 2 N-linked (GlcNAc...) asparagine glycosylation sites follow: N158 and N182. The helical transmembrane segment at 193 to 213 (IQWWMLLCLACAWSVLYMCTI) threads the bilayer. Topologically, residues 214 to 221 (RGIETTGK) are cytoplasmic. The chain crosses the membrane as a helical span at residues 222–242 (AVYITSTLPYVVLTIFLIRGL). The Extracellular portion of the chain corresponds to 243-268 (TLKGATNGIVFLFTPNVTELAQPDTW). Residue N258 is glycosylated (N-linked (GlcNAc...) asparagine). Residues 269–289 (LDAGAQVFFSFSLAFGGLISF) form a helical membrane-spanning segment. Over 290–304 (SSYNSVHNNCEKDSV) the chain is Cytoplasmic. A helical transmembrane segment spans residues 305-325 (IVSIINGFTSVYVAIVVYSVI). Over 326-413 (GFRATQRYDD…TEAITKMPLS (88 aa)) the chain is Extracellular. Residues N354 and N368 are each glycosylated (N-linked (GlcNAc...) asparagine). Residues 414–434 (PLWSVLFFIMLFCLGLSSMFG) traverse the membrane as a helical segment. The Cytoplasmic segment spans residues 435–456 (NMEGVVVPLQDLRVIPPKWPKE). Residues 457–477 (VLTGLICLGTFLIGFIFTLNS) form a helical membrane-spanning segment. Topologically, residues 478–490 (GQYWLSLLDSYAG) are extracellular. A helical membrane pass occupies residues 491–511 (SIPLLIIAFCEMFSVVYVYGV). Residues 512–531 (DRFNKDIEFMIGHKPNIFWQ) lie on the Cytoplasmic side of the membrane. A helical transmembrane segment spans residues 532-552 (VTWRVVSPLLMLIIFLFFFVV). Topologically, residues 553–581 (EVSQELTYSIWDPGYEEFPKSQKISYPNW) are extracellular. The chain crosses the membrane as a helical span at residues 582–602 (VYVVVVIVAGVPSLTIPGYAI). Residues 603-634 (YKLIRNHCQKPGDHQGLVSTLSTASMNGDLKY) are Cytoplasmic-facing. At S627 the chain carries Phosphoserine.

Belongs to the sodium:neurotransmitter symporter (SNF) (TC 2.A.22) family. SLC6A19 subfamily. Interacts in a tissue-specific manner with ACE2 in small intestine and with CLTRN in the kidney. Interacts with CLTRN; this interaction is required for trafficking of SLC6A19 to the plasma membrane and for its catalytic activation in kidneys. Interacts with ACE2; this interaction is required for trafficking of SLC6A19 to the plasma membrane and for its catalytic activation in intestine. Interacts with ANPEP; the interaction positively regulates its amino acid transporter activity. Robust expression in kidney and small intestine, with minimal expression in pancreas. Also expressed in stomach, liver, duodenum, ileocecum, colon and prostate. Not detected in testis, whole brain, cerebellum, fetal liver, spleen, skeletal muscle, uterus, heart or lung.

It is found in the cell membrane. The protein localises to the apical cell membrane. It catalyses the reaction L-alanine(in) + Na(+)(in) = L-alanine(out) + Na(+)(out). It carries out the reaction L-cysteine(in) + Na(+)(in) = L-cysteine(out) + Na(+)(out). The catalysed reaction is L-glutamine(in) + Na(+)(in) = L-glutamine(out) + Na(+)(out). The enzyme catalyses glycine(in) + Na(+)(in) = glycine(out) + Na(+)(out). It catalyses the reaction L-isoleucine(in) + Na(+)(in) = L-isoleucine(out) + Na(+)(out). It carries out the reaction L-leucine(in) + Na(+)(in) = L-leucine(out) + Na(+)(out). The catalysed reaction is L-methionine(in) + Na(+)(in) = L-methionine(out) + Na(+)(out). The enzyme catalyses L-phenylalanine(in) + Na(+)(in) = L-phenylalanine(out) + Na(+)(out). It catalyses the reaction L-serine(in) + Na(+)(in) = L-serine(out) + Na(+)(out). It carries out the reaction L-tryptophan(in) + Na(+)(in) = L-tryptophan(out) + Na(+)(out). The catalysed reaction is L-tyrosine(in) + Na(+)(in) = L-tyrosine(out) + Na(+)(out). The enzyme catalyses L-valine(in) + Na(+)(in) = L-valine(out) + Na(+)(out). In terms of biological role, transporter that mediates resorption of neutral amino acids across the apical membrane of renal and intestinal epithelial cells. This uptake is sodium-dependent and chloride-independent. Requires CLTRN in kidney or ACE2 in intestine for cell surface expression and amino acid transporter activity. The protein is Sodium-dependent neutral amino acid transporter B(0)AT1 (SLC6A19) of Homo sapiens (Human).